Reading from the N-terminus, the 288-residue chain is Fructose-bisphosphate aldolase (288 aa).

A D-glyceraldehyde 3-phosphate-binding site is contributed by S49. D84 functions as the Proton donor in the catalytic mechanism. Zn(2+) is bound by residues H85, D105, E135, and H177. G178 is a dihydroxyacetone phosphate binding site. H206 contributes to the Zn(2+) binding site. Dihydroxyacetone phosphate contacts are provided by residues 207-209 (GGS) and 228-231 (NINT).

The protein belongs to the class II fructose-bisphosphate aldolase family. Homodimer. It depends on Zn(2+) as a cofactor.

It catalyses the reaction beta-D-fructose 1,6-bisphosphate = D-glyceraldehyde 3-phosphate + dihydroxyacetone phosphate. It functions in the pathway carbohydrate degradation; glycolysis; D-glyceraldehyde 3-phosphate and glycerone phosphate from D-glucose: step 4/4. Catalyzes the aldol condensation of dihydroxyacetone phosphate (DHAP or glycerone-phosphate) with glyceraldehyde 3-phosphate (G3P) to form fructose 1,6-bisphosphate (FBP) in gluconeogenesis and the reverse reaction in glycolysis. This chain is Fructose-bisphosphate aldolase (fba), found in Mycoplasma genitalium (strain ATCC 33530 / DSM 19775 / NCTC 10195 / G37) (Mycoplasmoides genitalium).